Here is a 402-residue protein sequence, read N- to C-terminus: Eukaryotic initiation factor 4A (402 aa).

The Q motif signature appears at E29–K57. The Helicase ATP-binding domain occupies I60–I230. Position 73-80 (A73–T80) interacts with ATP. Residues D178–D181 carry the DEAD box motif. A Helicase C-terminal domain is found at G241–I402.

This sequence belongs to the DEAD box helicase family. eIF4A subfamily. EIF4F is a multi-subunit complex, the composition of which varies with external and internal environmental conditions. It is composed of at least EIF4A, EIF4E and EIF4G.

The catalysed reaction is ATP + H2O = ADP + phosphate + H(+). In terms of biological role, ATP-dependent RNA helicase which is a subunit of the eIF4F complex involved in cap recognition and is required for mRNA binding to ribosome. In the current model of translation initiation, eIF4A unwinds RNA secondary structures in the 5'-UTR of mRNAs which is necessary to allow efficient binding of the small ribosomal subunit, and subsequent scanning for the initiator codon. In Caenorhabditis elegans, this protein is Eukaryotic initiation factor 4A (inf-1).